The chain runs to 69 residues: Cold shock-like protein CspC (69 aa).

A CSD domain is found at 6 to 66; that stretch reads GQVKWFNESK…GQKGPAAVNV (61 aa).

It localises to the cytoplasm. This Shigella flexneri protein is Cold shock-like protein CspC (cspC).